Here is a 185-residue protein sequence, read N- to C-terminus: MAETAYVPRLREQFDREIRGKLTEQFGYANVMQVPRLDKVVLNMGIGEAVNDRKKAETAAADLALIAGQKPIVTYSRVAIATFKLRENQPIGAKVTLRKAKMYEFIDRLINVALPRVRDFRGLNPKSFDGRGNYSLGIKEHIIFPEIDFDKMGETWGMDVTVCTTARTDDEARALLTAFNFPFRQ.

Belongs to the universal ribosomal protein uL5 family. As to quaternary structure, part of the 50S ribosomal subunit; part of the 5S rRNA/L5/L18/L25 subcomplex. Contacts the 5S rRNA and the P site tRNA. Forms a bridge to the 30S subunit in the 70S ribosome.

This is one of the proteins that bind and probably mediate the attachment of the 5S RNA into the large ribosomal subunit, where it forms part of the central protuberance. In the 70S ribosome it contacts protein S13 of the 30S subunit (bridge B1b), connecting the 2 subunits; this bridge is implicated in subunit movement. Contacts the P site tRNA; the 5S rRNA and some of its associated proteins might help stabilize positioning of ribosome-bound tRNAs. The protein is Large ribosomal subunit protein uL5 of Rhodopseudomonas palustris (strain BisB18).